We begin with the raw amino-acid sequence, 1067 residues long: Ubiquitin carboxyl-terminal hydrolase 26 (1067 aa).

Over residues 1–12 the composition is skewed to basic residues; that stretch reads MSRPNTRNKNKR. The interval 1-22 is disordered; that stretch reads MSRPNTRNKNKRQRPDAVDSSS. The USP domain occupies 106-442; sequence AGLTNLGATC…DAYMLMYSLR (337 aa). C115 acts as the Nucleophile in catalysis. The Proton acceptor role is filled by H359. Residues 385–418 form a disordered region; that stretch reads KRPCNEASSSTPQSESNGTASSGNITDGIQSGSS. Polar residues predominate over residues 390–418; it reads EASSSTPQSESNGTASSGNITDGIQSGSS. DUSP domains lie at 503 to 595, 610 to 711, and 738 to 861; these read NALT…GDYC, DSYR…DCTC, and TLKV…SAFI. The Ubiquitin-like domain maps to 948–1031; it reads FEVDRRTSKR…LWVRDTEMHE (84 aa).

The protein belongs to the peptidase C19 family. In terms of tissue distribution, expressed in seedlings, roots, stems, leaves and inflorescences.

The protein localises to the nucleus. The enzyme catalyses Thiol-dependent hydrolysis of ester, thioester, amide, peptide and isopeptide bonds formed by the C-terminal Gly of ubiquitin (a 76-residue protein attached to proteins as an intracellular targeting signal).. Functionally, recognizes and hydrolyzes the peptide bond at the C-terminal Gly of ubiquitin. Involved in the processing of poly-ubiquitin precursors as well as that of ubiquitinated proteins. Deubiquitinates H2BK143ub1 of histone H2B. The polypeptide is Ubiquitin carboxyl-terminal hydrolase 26 (UBP26) (Arabidopsis thaliana (Mouse-ear cress)).